The chain runs to 247 residues: Ferredoxin:CoB-CoM heterodisulfide reductase subunit C (247 aa).

The 31-residue stretch at 32-62 (TPESLGLDRCIQCGACTASCPAARFTDYSPR) folds into the 4Fe-4S ferredoxin-type domain. [4Fe-4S] cluster is bound by residues Cys-41, Cys-44, Cys-47, Cys-51, Cys-84, Cys-87, Cys-90, and Cys-94. Residues 216–240 (RTGTSCTEKKKNSGDLGFESDREYT) show a composition bias toward basic and acidic residues. The disordered stretch occupies residues 216–247 (RTGTSCTEKKKNSGDLGFESDREYTGQEALTV).

It belongs to the HdrC family. In terms of assembly, the ferredoxin:CoB-CoM heterodisulfide reductase is composed of three subunits; HdrA1, HdrB1 and HdrC1. The cofactor is [4Fe-4S] cluster.

The protein localises to the cytoplasm. It catalyses the reaction coenzyme B + coenzyme M + 2 oxidized [2Fe-2S]-[ferredoxin] = coenzyme M-coenzyme B heterodisulfide + 2 reduced [2Fe-2S]-[ferredoxin] + 2 H(+). It participates in cofactor metabolism; coenzyme M-coenzyme B heterodisulfide reduction; coenzyme B and coenzyme M from coenzyme M-coenzyme B heterodisulfide: step 1/1. Functionally, part of a complex that catalyzes the reversible reduction of CoM-S-S-CoB to the thiol-coenzymes H-S-CoM (coenzyme M) and H-S-CoB (coenzyme B). Probably involved in methylotrophic methanogenesis but not in aceticlastic methanogenesis. In Methanosarcina acetivorans (strain ATCC 35395 / DSM 2834 / JCM 12185 / C2A), this protein is Ferredoxin:CoB-CoM heterodisulfide reductase subunit C.